Reading from the N-terminus, the 912-residue chain is MERAMEQLNRLTRSLRRARTVELPEDNETAVYTLMPMVMADQHRSVLELLSNSKFDVNYAFGRVKRSLLHIAANCGSVECLVLLLKRGADPNYQDISGCTPLHLAARNGQKKCMSKLLEYNADVNICNNEGLTAIHWLAVNGRTELLHDLVQHVTNVDVEDAMGQTALHVACQNGHKTTVLCLLDSGADINRPNVSGATPLYFACSHGQRDTAQILLLRGAKYLPDKNGVTPLDLCVQGGYGETCDILIQHHPRLFQTLIQMTQNEDLRENTLRQVLEHLSQQSEVQYLKILTGLAEVATTNGHKLLSISSSYEAQMKSLLRIVRIFCHVFRIGPSSPNNGNDMGYNGNKTPRNQVFKPLELLWHSLDEWLVLIATELTKNKRDSSNIACILLKQNQLDQQDISLAHQSAIGESGSYDHLSSSTRAEDFESCSAAGKQEPVADGQDVISMTANRLSAVIQAFYMCCSCQMPQGMTSPRFIEFVCKHDDVLKCFVTRNPKIIFDHFHFLLECPELMSRFMHIIKAQPFKERCEWFYEHLLAGQPDSDMVHRPVNENDILLVHRDSIFRSSCEVVFKSNCEKLKQGIAVRFHGEEGMGQGVVREWFDILSSEIINPDYALFTQSADGTTFQPNSNSSVNPDHLNYFRFAGEILGLALYHRQLVNIYFTRSFYKHILGIPVNYQDVASIDPEYAKNLQWILDNDISDLGLELTFSVETDVFGAMEEVPLKPGGASILVTQENKAEYVQLVTELRMTRAIQPQINGFLQGFHMFIPPSLIQLFDEYELELLLSGMPEIDVNDWMKNTEYTSGYERDDQVIQWFWEVVQELTQEERVLLLQFVTGSSRVPHGGFAYIMGGSGLQNFTIAAVAYTPNLLPTSSTCINMLKLPEYPSKEILKDRLLVALHCGSYGYTMA.

7 ANK repeats span residues 23-55, 64-93, 97-126, 130-159, 163-192, 196-226, and 228-253; these read LPEDNETAVYTLMPMVMADQHRSVLELLSNSKF, VKRSLLHIAANCGSVECLVLLLKRGADPNY, SGCTPLHLAARNGQKKCMSKLLEYNADVNI, EGLTAIHWLAVNGRTELLHDLVQHVTNVDV, MGQTALHVACQNGHKTTVLCLLDSGADINR, SGATPLYFACSHGQRDTAQILLLRGAKYLPD, and NGVTPLDLCVQGGYGETCDILIQHHP. Positions 577 to 912 constitute an HECT domain; the sequence is NCEKLKQGIA…HCGSYGYTMA (336 aa). The Glycyl thioester intermediate role is filled by Cys-879.

Its subcellular location is the golgi apparatus. It is found in the golgi stack membrane. The protein localises to the cytoplasm. It localises to the endoplasmic reticulum. It carries out the reaction S-ubiquitinyl-[E2 ubiquitin-conjugating enzyme]-L-cysteine + [acceptor protein]-L-lysine = [E2 ubiquitin-conjugating enzyme]-L-cysteine + N(6)-ubiquitinyl-[acceptor protein]-L-lysine.. The protein operates within protein modification; protein ubiquitination. Its function is as follows. E3 ubiquitin-protein ligase involved in Golgi membrane fusion and regulation of small GTPases. Acts as a regulator of Golgi membrane dynamics during the cell cycle: recruited to Golgi membrane by Rab proteins and regulates postmitotic Golgi membrane fusion. Acts by mediating ubiquitination during mitotic Golgi disassembly, ubiquitination serving as a signal for Golgi reassembly later, after cell division. This is E3 ubiquitin-protein ligase HACE1 (hace1) from Xenopus tropicalis (Western clawed frog).